A 159-amino-acid polypeptide reads, in one-letter code: MNISIPQIIAAILNFIILLLIVKHFWFDKITAVVDSRQSEIINKIEDTDKNQKLALELKEKNELELGNAKKQGKTIVEEYKSKAENVYEDIVKEAHEEADRIIKKSRLEAERQKKNAEEEIRAEAVELAVLVSSKTLEKTIDDLEHRRLIKDFISKVGI.

The chain crosses the membrane as a helical span at residues 2 to 22 (NISIPQIIAAILNFIILLLIV).

It belongs to the ATPase B chain family. In terms of assembly, F-type ATPases have 2 components, F(1) - the catalytic core - and F(0) - the membrane proton channel. F(1) has five subunits: alpha(3), beta(3), gamma(1), delta(1), epsilon(1). F(0) has three main subunits: a(1), b(2) and c(10-14). The alpha and beta chains form an alternating ring which encloses part of the gamma chain. F(1) is attached to F(0) by a central stalk formed by the gamma and epsilon chains, while a peripheral stalk is formed by the delta and b chains.

It localises to the cell membrane. F(1)F(0) ATP synthase produces ATP from ADP in the presence of a proton or sodium gradient. F-type ATPases consist of two structural domains, F(1) containing the extramembraneous catalytic core and F(0) containing the membrane proton channel, linked together by a central stalk and a peripheral stalk. During catalysis, ATP synthesis in the catalytic domain of F(1) is coupled via a rotary mechanism of the central stalk subunits to proton translocation. In terms of biological role, component of the F(0) channel, it forms part of the peripheral stalk, linking F(1) to F(0). The protein is ATP synthase subunit b of Clostridium botulinum (strain Loch Maree / Type A3).